The primary structure comprises 220 residues: Probable acrEF/envCD operon repressor (220 aa).

Positions 10-70 (LKTRQELIET…EMWLQQPSLR (61 aa)) constitute an HTH tetR-type domain. The segment at residues 33-52 (TLNDIADAANVTRGAIYWHF) is a DNA-binding region (H-T-H motif).

In terms of biological role, potential regulator protein for the acrEF/envCD genes. The polypeptide is Probable acrEF/envCD operon repressor (envR) (Escherichia coli O157:H7).